The sequence spans 137 residues: MANKPSPGELKNGLSEMQFYVTQHHGTEPPFTGRLLHNKKNGVYHCLVCDAPLFNSQTKYDSGCGWPSFYEPVSDEAIRYLTDNSHGMQRIEIRCGNCDAHLGHVFPDGPQPTGERYCVNSASLSFTDEQNGEQIKG.

Residues 7-129 enclose the MsrB domain; sequence PGELKNGLSE…NSASLSFTDE (123 aa). Zn(2+)-binding residues include C46, C49, C95, and C98. C118 serves as the catalytic Nucleophile.

It belongs to the MsrB Met sulfoxide reductase family. Requires Zn(2+) as cofactor.

The catalysed reaction is L-methionyl-[protein] + [thioredoxin]-disulfide + H2O = L-methionyl-(R)-S-oxide-[protein] + [thioredoxin]-dithiol. This is Peptide methionine sulfoxide reductase MsrB from Klebsiella pneumoniae (strain 342).